The following is a 479-amino-acid chain: Aspartyl/glutamyl-tRNA(Asn/Gln) amidotransferase subunit B (479 aa).

The protein belongs to the GatB/GatE family. GatB subfamily. As to quaternary structure, heterotrimer of A, B and C subunits.

The catalysed reaction is L-glutamyl-tRNA(Gln) + L-glutamine + ATP + H2O = L-glutaminyl-tRNA(Gln) + L-glutamate + ADP + phosphate + H(+). It carries out the reaction L-aspartyl-tRNA(Asn) + L-glutamine + ATP + H2O = L-asparaginyl-tRNA(Asn) + L-glutamate + ADP + phosphate + 2 H(+). Functionally, allows the formation of correctly charged Asn-tRNA(Asn) or Gln-tRNA(Gln) through the transamidation of misacylated Asp-tRNA(Asn) or Glu-tRNA(Gln) in organisms which lack either or both of asparaginyl-tRNA or glutaminyl-tRNA synthetases. The reaction takes place in the presence of glutamine and ATP through an activated phospho-Asp-tRNA(Asn) or phospho-Glu-tRNA(Gln). This chain is Aspartyl/glutamyl-tRNA(Asn/Gln) amidotransferase subunit B, found in Streptococcus pyogenes serotype M49 (strain NZ131).